The chain runs to 322 residues: Replication factor C small subunit (322 aa).

45–52 (GPPGVGKT) contributes to the ATP binding site.

The protein belongs to the activator 1 small subunits family. RfcS subfamily. In terms of assembly, heteromultimer composed of small subunits (RfcS) and large subunits (RfcL).

Its function is as follows. Part of the RFC clamp loader complex which loads the PCNA sliding clamp onto DNA. In Methanocella arvoryzae (strain DSM 22066 / NBRC 105507 / MRE50), this protein is Replication factor C small subunit.